The following is a 137-amino-acid chain: Large ribosomal subunit protein uL16 (137 aa).

Belongs to the universal ribosomal protein uL16 family. As to quaternary structure, part of the 50S ribosomal subunit.

Functionally, binds 23S rRNA and is also seen to make contacts with the A and possibly P site tRNAs. In Alkalilimnicola ehrlichii (strain ATCC BAA-1101 / DSM 17681 / MLHE-1), this protein is Large ribosomal subunit protein uL16.